A 95-amino-acid chain; its full sequence is Cerebratulus toxin A-III (95 aa).

Cystine bridges form between C17–C38, C23–C34, and C48–C61.

Belongs to the worm cytolysin family.

The protein localises to the secreted. Permeabilizes a variety of cells. Forms large pores which allows the release of large proteins almost as rapidly as small organic molecules and inorganic ions. At sublytic concentrations, the toxin also inhibits protein kinase C and endogenous voltage-gated cation selective (sodium, calcium) channels occurring in the nervous and cardiovascular systems. In Cerebratulus lacteus (Milky ribbon worm), this protein is Cerebratulus toxin A-III.